Reading from the N-terminus, the 227-residue chain is Enolase-phosphatase E1 (227 aa).

2 residues coordinate Mg(2+): Asp-11 and Glu-13. Substrate contacts are provided by residues 118–119 and Lys-161; that span reads SS. Position 186 (Asp-186) interacts with Mg(2+).

Belongs to the HAD-like hydrolase superfamily. MasA/MtnC family. As to quaternary structure, monomer. The cofactor is Mg(2+).

Its subcellular location is the cytoplasm. The protein localises to the nucleus. It carries out the reaction 5-methylsulfanyl-2,3-dioxopentyl phosphate + H2O = 1,2-dihydroxy-5-(methylsulfanyl)pent-1-en-3-one + phosphate. The protein operates within amino-acid biosynthesis; L-methionine biosynthesis via salvage pathway; L-methionine from S-methyl-5-thio-alpha-D-ribose 1-phosphate: step 3/6. Its pathway is amino-acid biosynthesis; L-methionine biosynthesis via salvage pathway; L-methionine from S-methyl-5-thio-alpha-D-ribose 1-phosphate: step 4/6. Its function is as follows. Bifunctional enzyme that catalyzes the enolization of 2,3-diketo-5-methylthiopentyl-1-phosphate (DK-MTP-1-P) into the intermediate 2-hydroxy-3-keto-5-methylthiopentenyl-1-phosphate (HK-MTPenyl-1-P), which is then dephosphorylated to form the acireductone 1,2-dihydroxy-3-keto-5-methylthiopentene (DHK-MTPene). In Saccharomyces cerevisiae (strain YJM789) (Baker's yeast), this protein is Enolase-phosphatase E1.